Here is a 554-residue protein sequence, read N- to C-terminus: Valerianol synthase TPS1G (554 aa).

Mg(2+) contacts are provided by D307 and D311. The DDXXD motif motif lies at 326–330; that stretch reads VQRWD. Residues D452, S456, and E460 each contribute to the Mg(2+) site.

The protein belongs to the terpene synthase family. The cofactor is Mg(2+).

It carries out the reaction (2E,6E)-farnesyl diphosphate + H2O = valerianol + diphosphate. It participates in secondary metabolite biosynthesis; terpenoid biosynthesis. Terpene synthase that catalyzes the biosynthesis of the terpene valerianol, which is a volatile compound of floral scent. This Camellia hiemalis (Camellia) protein is Valerianol synthase TPS1G.